The primary structure comprises 143 residues: AP-2 complex subunit sigma (143 aa).

It belongs to the adaptor complexes small subunit family. In terms of assembly, adaptor protein complex 2 (AP-2) is a heterotetramer composed of two large adaptins (alpha-type subunit apl3 and beta-type subunit apl1), a medium chain (mu-type subunit apm4) and a small adaptin (sigma-type subunit aps2).

Its subcellular location is the cell membrane. The protein resides in the membrane. It localises to the coated pit. Its function is as follows. Component of the adaptor complexes which link clathrin to receptors in coated vesicles. Clathrin-associated protein complexes are believed to interact with the cytoplasmic tails of membrane proteins, leading to their selection and concentration. This chain is AP-2 complex subunit sigma (aps2), found in Schizosaccharomyces pombe (strain 972 / ATCC 24843) (Fission yeast).